A 527-amino-acid chain; its full sequence is Glutamate--cysteine ligase (527 aa).

Belongs to the glutamate--cysteine ligase type 1 family. Type 1 subfamily.

It catalyses the reaction L-cysteine + L-glutamate + ATP = gamma-L-glutamyl-L-cysteine + ADP + phosphate + H(+). The protein operates within sulfur metabolism; glutathione biosynthesis; glutathione from L-cysteine and L-glutamate: step 1/2. The protein is Glutamate--cysteine ligase of Bordetella parapertussis (strain 12822 / ATCC BAA-587 / NCTC 13253).